A 95-amino-acid chain; its full sequence is Small ubiquitin-related modifier 2 (95 aa).

A Peptide (Met-Gly) (interchain with G-Cter in ubiquitin) cross-link involves residue M1. Residues K5 and K7 each participate in a glycyl lysine isopeptide (Lys-Gly) (interchain with G-Cter in SUMO2) cross-link. K11 bears the N6-acetyllysine; alternate mark. A Glycyl lysine isopeptide (Lys-Gly) (interchain with G-Cter in SUMO); alternate cross-link involves residue K11. K11 is covalently cross-linked (Glycyl lysine isopeptide (Lys-Gly) (interchain with G-Cter in SUMO1); alternate). K11 participates in a covalent cross-link: Glycyl lysine isopeptide (Lys-Gly) (interchain with G-Cter in SUMO2); alternate. K11 participates in a covalent cross-link: Glycyl lysine isopeptide (Lys-Gly) (interchain with G-Cter in ubiquitin); alternate. The region spanning 16–95 (DHINLKVAGQ…VFQQQTGGVY (80 aa)) is the Ubiquitin-like domain. A Glycyl lysine isopeptide (Lys-Gly) (interchain with G-Cter in SUMO2) cross-link involves residue K21. A Glycyl lysine isopeptide (Gly-Lys) (interchain with K-? in acceptor proteins) cross-link involves residue G93. Residues 94–95 (VY) constitute a propeptide that is removed on maturation.

The protein belongs to the ubiquitin family. SUMO subfamily. Interacts with SAE2 and UBE2I. Interacts with ZNF451. Identified in a complex with ZNF451 and UBE2I/UBC9, where one ZNF451 interacts with one UBE2I/UBC9 and two SUMO2 chains, one bound to the UBE2I/UBC9 active site and the other to another region of the same UBE2I/UBC9 molecule. Covalently attached to a number of proteins. Interacts with PELP1. Interacts with USP25; the interaction sumoylates USP25. Interacts with SIMC1, CASP8AP2, RNF111 and SOBP (via SIM domains). Interacts with MTA1. Interacts with HINT1. Interacts with GCNA (via SIM domains); this interaction allows the GCNA recruitment to DPCs sites. In terms of processing, polymeric chains can be formed through Lys-11 cross-linking. Polymeric SUMO2 chains undergo 'Lys-6'-, 'Lys-11'-, 'Lys-48'- and 'Lys-63'-linked polyubiquitination by RNF4. Cleavage of precursor form by SENP1 or SENP2 is necessary for function. Post-translationally, monoubiquitinated N-terminally by UBE2W, which primes it for RNF4-dependent polyubiquitination by the UBE2V1-UBE2N heterodimer.

It localises to the nucleus. The protein localises to the PML body. Its function is as follows. Ubiquitin-like protein that can be covalently attached to proteins as a monomer or as a lysine-linked polymer. Covalent attachment via an isopeptide bond to its substrates requires prior activation by the E1 complex SAE1-SAE2 and linkage to the E2 enzyme UBE2I, and can be promoted by an E3 ligase such as PIAS1-4, RANBP2 or CBX4. This post-translational modification on lysine residues of proteins plays a crucial role in a number of cellular processes such as nuclear transport, DNA replication and repair, mitosis and signal transduction. Polymeric SUMO2 chains are also susceptible to polyubiquitination which functions as a signal for proteasomal degradation of modified proteins. Plays a role in the regulation of sumoylation status of SETX. In Bos taurus (Bovine), this protein is Small ubiquitin-related modifier 2.